Consider the following 916-residue polypeptide: Neurofilament medium polypeptide (916 aa).

A compositionally biased stretch (polar residues) spans M1–N10. Residues M1–S51 are disordered. S2 carries the post-translational modification N-acetylserine. The segment at S2–Q104 is head. A compositionally biased stretch (low complexity) spans R21–S44. Residue S30 is modified to Phosphoserine. At R42 the chain carries Omega-N-methylarginine. An O-linked (GlcNAc) threonine glycan is attached at T47. A Phosphoserine modification is found at S99. The region spanning E101–F412 is the IF rod domain. The coil 1A stretch occupies residues L105–L136. Residues R137–A149 are linker 1. The interval Y150 to Q248 is coil 1B. S226 carries the phosphoserine modification. Positions I249–D265 are linker 12. A coil 2A region spans residues I266–Q287. The interval A288–W291 is linker 2. The coil 2B stretch occupies residues F292–F412. Position 320 is a phosphotyrosine (Y320). Phosphoserine occurs at positions 346 and 418. A tail region spans residues S413 to D916. O-linked (GlcNAc) threonine glycosylation occurs at T431. A phosphoserine mark is found at S467 and S483. The segment at K485–K851 is disordered. The segment covering E493–E505 has biased composition (acidic residues). A Phosphoserine modification is found at S511. Acidic residues predominate over residues K521–E541. Basic and acidic residues predominate over residues G542–K561. Residues S545, S553, S558, and S559 each carry the phosphoserine modification. Acidic residues predominate over residues E562 to A582. T571 is subject to Phosphothreonine. Basic and acidic residues predominate over residues K583–K614. 6 repeat units span residues K614 to G626, K627 to G639, K640 to G652, K653 to G665, K666 to A678, and K679 to K691. Residues K614–K691 are 6 X 13 AA approximate tandem repeats of K-S-P-V-[PS]-K-S-P-V-E-E-[KA]-[GAK]. 2 positions are modified to phosphoserine: S641 and S646. Phosphoserine occurs at positions 680 and 685. 3 stretches are compositionally biased toward basic and acidic residues: residues P686–Q701, K707–A742, and V755–G778. S736 is subject to Phosphoserine. Residues S783, S821, and S837 each carry the phosphoserine modification. The segment covering S788–G828 has biased composition (basic and acidic residues). The span at A839 to K851 shows a compositional bias: basic and acidic residues.

Belongs to the intermediate filament family. In terms of assembly, forms heterodimers with NEFL; which can further hetero-oligomerize (in vitro). Forms heterodimers with INA (in vitro). Post-translationally, there are a number of repeats of the tripeptide K-S-P, NFM is phosphorylated on a number of the serines in this motif. It is thought that phosphorylation of NFM results in the formation of interfilament cross bridges that are important in the maintenance of axonal caliber. Phosphorylation seems to play a major role in the functioning of the larger neurofilament polypeptides (NF-M and NF-H), the levels of phosphorylation being altered developmentally and coincidentally with a change in the neurofilament function. In terms of processing, phosphorylated in the head and rod regions by the PKC kinase PKN1, leading to the inhibition of polymerization.

Its subcellular location is the cytoplasm. It localises to the cytoskeleton. It is found in the cell projection. The protein resides in the axon. Its function is as follows. Neurofilaments usually contain three intermediate filament proteins: NEFL, NEFM, and NEFH which are involved in the maintenance of neuronal caliber. May additionally cooperate with the neuronal intermediate filament proteins PRPH and INA to form neuronal filamentous networks. This Homo sapiens (Human) protein is Neurofilament medium polypeptide (NEFM).